Consider the following 73-residue polypeptide: Guanine nucleotide-binding protein G(I)/G(S)/G(O) subunit gamma-11 (73 aa).

Residues 54–73 are disordered; the sequence is VKGIPEDKNPFKEKGSCIIS. C70 is modified (cysteine methyl ester). C70 is lipidated: S-farnesyl cysteine. A propeptide spans 71–73 (removed in mature form); sequence IIS.

This sequence belongs to the G protein gamma family. As to quaternary structure, g proteins are composed of 3 units, alpha, beta and gamma. Interacts with beta-1 and beta-3, but not with beta-2.

It localises to the cell membrane. Its function is as follows. Guanine nucleotide-binding proteins (G proteins) are involved as a modulator or transducer in various transmembrane signaling systems. The beta and gamma chains are required for the GTPase activity, for replacement of GDP by GTP, and for G protein-effector interaction. In Bos taurus (Bovine), this protein is Guanine nucleotide-binding protein G(I)/G(S)/G(O) subunit gamma-11 (GNG11).